We begin with the raw amino-acid sequence, 61 residues long: Small ribosomal subunit protein uS14B (61 aa).

The Zn(2+) site is built by C24, C27, C40, and C43.

Belongs to the universal ribosomal protein uS14 family. Zinc-binding uS14 subfamily. Part of the 30S ribosomal subunit. Contacts proteins S3 and S10. Zn(2+) is required as a cofactor.

Binds 16S rRNA, required for the assembly of 30S particles and may also be responsible for determining the conformation of the 16S rRNA at the A site. The sequence is that of Small ribosomal subunit protein uS14B from Staphylococcus epidermidis (strain ATCC 35984 / DSM 28319 / BCRC 17069 / CCUG 31568 / BM 3577 / RP62A).